The primary structure comprises 254 residues: 5'-nucleotidase SurE (254 aa).

A divalent metal cation contacts are provided by aspartate 8, aspartate 9, serine 40, and asparagine 93.

This sequence belongs to the SurE nucleotidase family. It depends on a divalent metal cation as a cofactor.

The protein resides in the cytoplasm. The catalysed reaction is a ribonucleoside 5'-phosphate + H2O = a ribonucleoside + phosphate. In terms of biological role, nucleotidase that shows phosphatase activity on nucleoside 5'-monophosphates. This is 5'-nucleotidase SurE from Actinobacillus pleuropneumoniae serotype 5b (strain L20).